A 199-amino-acid chain; its full sequence is Probable DNA-directed RNA polymerase subunit delta (199 aa).

Residues 14 to 81 (LSLIEVAHAI…GDNMWGLRAW (68 aa)) enclose the HTH HARE-type domain. 3 stretches are compositionally biased toward acidic residues: residues 116–147 (GDDD…DTDD), 157–171 (AGVD…DETL), and 182–199 (LNDD…DESK). A disordered region spans residues 116 to 199 (GDDDDVIDYD…DYDDEDDESK (84 aa)).

The protein belongs to the RpoE family. RNAP is composed of a core of 2 alpha, a beta and a beta' subunits. The core is associated with a delta subunit and one of several sigma factors.

Participates in both the initiation and recycling phases of transcription. In the presence of the delta subunit, RNAP displays an increased specificity of transcription, a decreased affinity for nucleic acids, and an increased efficiency of RNA synthesis because of enhanced recycling. The chain is Probable DNA-directed RNA polymerase subunit delta from Lactiplantibacillus plantarum (strain ATCC BAA-793 / NCIMB 8826 / WCFS1) (Lactobacillus plantarum).